Here is a 971-residue protein sequence, read N- to C-terminus: uncharacterized protein (971 aa).

Residues 1-24 (MQSNLLKVLGVLAIVATLVCFIFA) form the signal peptide. The tract at residues 127–146 (RTRPGKSNLDDSGQMIPIPR) is disordered. 6 helical membrane passes run 611–631 (IKAI…LGFA), 721–741 (LGLS…IVII), 753–773 (AFMA…FLLF), 795–815 (VVMM…LDFV), 832–852 (FIGT…INWF), and 865–885 (GVNM…YGYV). Residues 933 to 971 (TGRAKSRLEQRNRTLEHAEQNSKKYKKRIGENTNEETLK) are disordered. Positions 938 to 954 (SRLEQRNRTLEHAEQNS) are enriched in basic and acidic residues.

Belongs to the TrbL/VirB6 family.

Its subcellular location is the cell membrane. This is an uncharacterized protein from Rickettsia prowazekii (strain Madrid E).